A 339-amino-acid polypeptide reads, in one-letter code: Uroporphyrinogen decarboxylase (339 aa).

Residues 21–25 (RQAGR), Asp-71, Tyr-147, Ser-202, and His-315 each bind substrate.

It belongs to the uroporphyrinogen decarboxylase family. In terms of assembly, homodimer.

The protein resides in the cytoplasm. The catalysed reaction is uroporphyrinogen III + 4 H(+) = coproporphyrinogen III + 4 CO2. It participates in porphyrin-containing compound metabolism; protoporphyrin-IX biosynthesis; coproporphyrinogen-III from 5-aminolevulinate: step 4/4. In terms of biological role, catalyzes the decarboxylation of four acetate groups of uroporphyrinogen-III to yield coproporphyrinogen-III. This is Uroporphyrinogen decarboxylase from Helicobacter acinonychis (strain Sheeba).